A 90-amino-acid polypeptide reads, in one-letter code: MNKTELINAVAETSGLSKKDATKAVDAVFDSITEALRKGDKVQLIGFGNFEVRERAARKGRNPQTGEEMEIPASKVPAFKPGKALKDAVK.

Thr-4 carries the post-translational modification Phosphothreonine. Positions 56–90 are disordered; that stretch reads AARKGRNPQTGEEMEIPASKVPAFKPGKALKDAVK.

The protein belongs to the bacterial histone-like protein family. As to quaternary structure, homodimer.

Its function is as follows. Histone-like DNA-binding protein which is capable of wrapping DNA to stabilize it, and thus to prevent its denaturation under extreme environmental conditions. The chain is DNA-binding protein HU (hup) from Geobacillus stearothermophilus (Bacillus stearothermophilus).